The chain runs to 346 residues: High mobility group protein 20A (346 aa).

Composition is skewed to polar residues over residues 1 to 10 (MESLMASSTL) and 55 to 65 (SQGQLLQSEAS). Disordered stretches follow at residues 1 to 112 (MESL…YVRF) and 178 to 210 (FSRKTQDRQKGKSHRQDAARQATHDHEKETEVK). Residues 71–81 (NEQRPEDEQRS) are compositionally biased toward basic and acidic residues. The span at 82 to 95 (KRGGWSKGRKRKKP) shows a compositional bias: basic residues. Residues 102–170 (PKSPLTGYVR…RYMKELEQYQ (69 aa)) constitute a DNA-binding region (HMG box). The residue at position 104 (serine 104) is a Phosphoserine. Basic and acidic residues predominate over residues 181–210 (KTQDRQKGKSHRQDAARQATHDHEKETEVK). A coiled-coil region spans residues 228–272 (SKAREAELRQLRKSNMEFEERNAALQKHVESMRTAVEKLEVDVIQ).

In terms of assembly, interacts with DTNB. As to expression, expressed in brain. Detected in mature neurons.

Its subcellular location is the nucleus. Plays a role in neuronal differentiation as chromatin-associated protein. Acts as inhibitor of HMG20B. Overcomes the repressive effects of the neuronal silencer REST and induces the activation of neuronal-specific genes. Involved in the recruitment of the histone methyltransferase KMT2A/MLL1 and consequent increased methylation of histone H3 lysine 4. This is High mobility group protein 20A (Hmg20a) from Mus musculus (Mouse).